A 139-amino-acid polypeptide reads, in one-letter code: 3-hydroxyacyl-[acyl-carrier-protein] dehydratase FabZ (139 aa).

Histidine 46 is an active-site residue.

This sequence belongs to the thioester dehydratase family. FabZ subfamily.

The protein resides in the cytoplasm. The catalysed reaction is a (3R)-hydroxyacyl-[ACP] = a (2E)-enoyl-[ACP] + H2O. Involved in unsaturated fatty acids biosynthesis. Catalyzes the dehydration of short chain beta-hydroxyacyl-ACPs and long chain saturated and unsaturated beta-hydroxyacyl-ACPs. This Petrotoga mobilis (strain DSM 10674 / SJ95) protein is 3-hydroxyacyl-[acyl-carrier-protein] dehydratase FabZ.